A 611-amino-acid polypeptide reads, in one-letter code: Leucine aminopeptidase (611 aa).

Substrate is bound by residues 129–131 (QCQ) and 278–282 (GGMEN). His-305 provides a ligand contact to Zn(2+). Glu-306 functions as the Proton acceptor in the catalytic mechanism. His-309 and Glu-328 together coordinate Zn(2+). Tyr-393 acts as the Proton donor in catalysis. 562-564 (RMK) serves as a coordination point for substrate.

The protein belongs to the peptidase M1 family. Zn(2+) is required as a cofactor.

The protein localises to the cytoplasm. It carries out the reaction an epoxide + H2O = an ethanediol. Functionally, aminopeptidase that preferentially cleaves di- and tripeptides. Also has low epoxide hydrolase activity (in vitro). Can hydrolyze the epoxide leukotriene LTA(4) but it forms preferentially 5,6-dihydroxy-7,9,11,14-eicosatetraenoic acid rather than the cytokine leukotriene B(4) as the product compared to the homologous mammalian enzyme (in vitro). The chain is Leucine aminopeptidase (LKHA4) from Oryza sativa subsp. japonica (Rice).